A 58-amino-acid polypeptide reads, in one-letter code: U8-ctenitoxin-Pk1a (58 aa).

Intrachain disulfides connect Cys2–Cys16, Cys9–Cys22, Cys15–Cys40, Cys24–Cys38, and Cys48–Cys55.

In terms of tissue distribution, expressed by the venom gland.

It is found in the secreted. In terms of biological role, no toxic effects on mice at dose levels of 5 ug per mouse. May be toxic to insects. In Phoneutria keyserlingi (Brazilian wandering spider), this protein is U8-ctenitoxin-Pk1a.